We begin with the raw amino-acid sequence, 419 residues long: UDP-N-acetylglucosamine 1-carboxyvinyltransferase (419 aa).

Residue 22 to 23 (KN) coordinates phosphoenolpyruvate. Position 92 (R92) interacts with UDP-N-acetyl-alpha-D-glucosamine. Catalysis depends on C116, which acts as the Proton donor. Position 116 is a 2-(S-cysteinyl)pyruvic acid O-phosphothioketal (C116). Residues D306 and I328 each contribute to the UDP-N-acetyl-alpha-D-glucosamine site.

It belongs to the EPSP synthase family. MurA subfamily.

It localises to the cytoplasm. It catalyses the reaction phosphoenolpyruvate + UDP-N-acetyl-alpha-D-glucosamine = UDP-N-acetyl-3-O-(1-carboxyvinyl)-alpha-D-glucosamine + phosphate. It participates in cell wall biogenesis; peptidoglycan biosynthesis. In terms of biological role, cell wall formation. Adds enolpyruvyl to UDP-N-acetylglucosamine. This is UDP-N-acetylglucosamine 1-carboxyvinyltransferase from Psychromonas ingrahamii (strain DSM 17664 / CCUG 51855 / 37).